Here is a 356-residue protein sequence, read N- to C-terminus: MASKKQRIGVLTSGGDAPGLNAVIRAVVKSASGLGWEVIGIHDGFEGLLGTKSYRVLTNADVQGLLPRGGTILRTTNKGHFGPRRSDELSEADPYVRAVKAIEEMGLRALITIGGEGTQRIALELHKLGAPVIGVPKTIDNDLAGTDRTFGFDTALQVATDAIDRLHTTAASHNRVMVLEVMGRHTGWIALHAGLAGGADVILIPEIPFSIERVAEKVMARDQQGSSFSIIVVAEGARPRGGSEMYIAEGRLGGIGHWVGEQLEKLTAKEVRVVVLGHLQRGGSPSPYDRLLSTRYGAAAVQAAARGIYGEMVALRGQDIVTVPLAEACGHLNRVRPHSDLVLCARSLGIAFGDEL.

ATP-binding positions include Gly-15, Lys-78–Gly-79, and Gly-115–Thr-118. Glu-116 provides a ligand contact to Mg(2+). Residues Thr-138–Asp-140, Arg-175, Met-182–Arg-184, Glu-235, Arg-272, and His-278–Arg-281 each bind substrate. Asp-140 acts as the Proton acceptor in catalysis.

The protein belongs to the phosphofructokinase type A (PFKA) family. Mixed-substrate PFK group III subfamily. Homodimer or homotetramer. Requires Mg(2+) as cofactor.

It is found in the cytoplasm. It catalyses the reaction beta-D-fructose 6-phosphate + ATP = beta-D-fructose 1,6-bisphosphate + ADP + H(+). It functions in the pathway carbohydrate degradation; glycolysis; D-glyceraldehyde 3-phosphate and glycerone phosphate from D-glucose: step 3/4. In terms of biological role, catalyzes the phosphorylation of D-fructose 6-phosphate to fructose 1,6-bisphosphate by ATP, the first committing step of glycolysis. The protein is ATP-dependent 6-phosphofructokinase of Chloroflexus aurantiacus (strain ATCC 29366 / DSM 635 / J-10-fl).